Here is a 245-residue protein sequence, read N- to C-terminus: Endonuclease III (245 aa).

Positions 119–138 (MDKLVTLPGVGRKTANVILG) constitute a HhH domain. [4Fe-4S] cluster is bound by residues Cys-198, Cys-205, Cys-208, and Cys-214.

Belongs to the Nth/MutY family. Requires [4Fe-4S] cluster as cofactor.

The enzyme catalyses 2'-deoxyribonucleotide-(2'-deoxyribose 5'-phosphate)-2'-deoxyribonucleotide-DNA = a 3'-end 2'-deoxyribonucleotide-(2,3-dehydro-2,3-deoxyribose 5'-phosphate)-DNA + a 5'-end 5'-phospho-2'-deoxyribonucleoside-DNA + H(+). Its function is as follows. DNA repair enzyme that has both DNA N-glycosylase activity and AP-lyase activity. The DNA N-glycosylase activity releases various damaged pyrimidines from DNA by cleaving the N-glycosidic bond, leaving an AP (apurinic/apyrimidinic) site. The AP-lyase activity cleaves the phosphodiester bond 3' to the AP site by a beta-elimination, leaving a 3'-terminal unsaturated sugar and a product with a terminal 5'-phosphate. Has a preference for oxidized pyrimidines, such as thymine glycol (prefers 5S isomers) 5,6-dihydrouracil:G, 5-hydroxyuracil:G, 5-hydroxycytosine:G and urea:A. Cleaves ssDNA containing an AP site. The protein is Endonuclease III of Mycobacterium tuberculosis (strain ATCC 25618 / H37Rv).